Here is a 1077-residue protein sequence, read N- to C-terminus: ATP-dependent DNA helicase MPH1 (1077 aa).

Residues 99–266 (IVHRALFENV…EVVDNLQISK (168 aa)) enclose the Helicase ATP-binding domain. 112 to 119 (IPTGMGKT) is a binding site for ATP. The DEAH box signature appears at 214 to 217 (DEAH). A Helicase C-terminal domain is found at 511-660 (KKVDRIRRLE…SLNYKVTDRI (150 aa)). Disordered stretches follow at residues 536–556 (EKLA…ISGM) and 831–859 (TLSS…PKRQ). The span at 831-841 (TLSSDNKSTPD) shows a compositional bias: polar residues.

The protein belongs to the DEAD box helicase family. DEAH subfamily. FANCM sub-subfamily. Interacts with the MHF histone-fold complex to form the FANCM-MHF complex.

Its subcellular location is the nucleus. It catalyses the reaction ATP + H2O = ADP + phosphate + H(+). Its function is as follows. ATP-dependent DNA helicase involved in DNA damage repair by homologous recombination and in genome maintenance. Capable of unwinding D-loops. Plays a role in limiting crossover recombinants during mitotic DNA double-strand break (DSB) repair. Component of a FANCM-MHF complex which promotes gene conversion at blocked replication forks, probably by reversal of the stalled fork. The sequence is that of ATP-dependent DNA helicase MPH1 from Eremothecium gossypii (strain ATCC 10895 / CBS 109.51 / FGSC 9923 / NRRL Y-1056) (Yeast).